We begin with the raw amino-acid sequence, 269 residues long: HTH-type transcriptional regulator Rv0792c (269 aa).

Positions 20–88 (VPASTQLAEA…QGLGTFVADP (69 aa)) constitute an HTH gntR-type domain. A DNA-binding region (H-T-H motif) is located at residues 48-67 (ERELIDRSGLSRVTVRAAVG).

Homodimer.

Its activity is regulated as follows. DNA-binding activity is increased in the presence of L-arabinose and inhibited by the small molecule I-OMe-Tyrphostin. Transcriptional regulator required for survival in oxidative stress and for establishing infection in host tissues. Regulates the expression of a subset of genes involved in oxidative stress adaptation and virulence, enabling the bacteria to adapt and persist in host tissues. The chain is HTH-type transcriptional regulator Rv0792c from Mycobacterium tuberculosis (strain ATCC 25618 / H37Rv).